We begin with the raw amino-acid sequence, 61 residues long: Large ribosomal subunit protein eL37 (61 aa).

Positions 18, 21, 33, and 36 each coordinate Zn(2+). The C4-type zinc-finger motif lies at 18–36 (CRRCGRNAYNPTKKYCASC).

The protein belongs to the eukaryotic ribosomal protein eL37 family. Zn(2+) is required as a cofactor.

Its function is as follows. Binds to the 23S rRNA. The sequence is that of Large ribosomal subunit protein eL37 from Methanosphaera stadtmanae (strain ATCC 43021 / DSM 3091 / JCM 11832 / MCB-3).